We begin with the raw amino-acid sequence, 65 residues long: MPKMKTNRAAAKRFKRTGTGKFMRARANKSHILTKKSPQRKRRLRQGTAVDAINVRALEHMLPYL.

The protein belongs to the bacterial ribosomal protein bL35 family.

The polypeptide is Large ribosomal subunit protein bL35 (Syntrophobacter fumaroxidans (strain DSM 10017 / MPOB)).